The sequence spans 431 residues: Mannan endo-1,4-beta-mannosidase 7 (431 aa).

The first 25 residues, 1–25, serve as a signal peptide directing secretion; the sequence is MKLLALFPFLAIVIQLSCWELGTDA. The substrate site is built by Trp-87 and Asn-202. Glu-203 functions as the Proton donor in the catalytic mechanism. A substrate-binding site is contributed by Tyr-280. The active-site Nucleophile is the Glu-320. Trp-362 provides a ligand contact to substrate.

The protein belongs to the glycosyl hydrolase 5 (cellulase A) family. In terms of tissue distribution, expressed in stems, flowers, siliques and seeds. Expressed in root vasculature, leaf hydathodes, anther filaments, stigma, sepal vasculature, at the base and apical parts of siliques, and replum. Expressed in the micropylar endosperm and radicle tip in early germinating seeds.

It is found in the secreted. The enzyme catalyses Random hydrolysis of (1-&gt;4)-beta-D-mannosidic linkages in mannans, galactomannans and glucomannans.. Functionally, required for both, loosening of the micropylar endosperm, and rupture of the seed coat in germinating seeds. May participate in the hydrolysis of the mannans in the cell wall of germinating seeds. This chain is Mannan endo-1,4-beta-mannosidase 7 (MAN7), found in Arabidopsis thaliana (Mouse-ear cress).